A 313-amino-acid chain; its full sequence is Olfactory receptor 1f45 (313 aa).

Over 1–25 the chain is Extracellular; the sequence is MSSTNQSSVTEFLLLGLSRQPQQQQ. A glycan (N-linked (GlcNAc...) asparagine) is linked at Asn-5. The chain crosses the membrane as a helical span at residues 26–50; it reads LLFLLFLIMYLATVLGNLLIILAIG. At 51 to 57 the chain is on the cytoplasmic side; sequence TDSRLHT. A helical membrane pass occupies residues 58–79; it reads PMYFFLSNLSFVDVCFSSTTVP. The Extracellular segment spans residues 80 to 100; the sequence is KVLANHILGSQAISFSGCLTQ. Cys-97 and Cys-189 form a disulfide bridge. Residues 101-120 traverse the membrane as a helical segment; the sequence is LYFLAVFGNMDNFLLAVMSY. The Cytoplasmic portion of the chain corresponds to 121–139; that stretch reads DRFVAICHPLHYTTKMTRQ. A helical membrane pass occupies residues 140–158; it reads LCVLLVVGSWVVANMNCLL. Residues 159–196 lie on the Extracellular side of the membrane; it reads HILLMARLSFCADNMIPHFFCDGTPLLKLSCSDTHLNE. Residues 197–219 form a helical membrane-spanning segment; that stretch reads LMILTEGAVVMVTPFVCILISYI. Over 220–236 the chain is Cytoplasmic; it reads HITCAVLRVSSPRGGWK. A helical membrane pass occupies residues 237-260; the sequence is SFSTCGSHLAVVCLFYGTVIAVYF. At 261–272 the chain is on the extracellular side; it reads NPSSSHLAGRDM. The chain crosses the membrane as a helical span at residues 273–292; that stretch reads AAAVMYAVVTPMLNPFIYSL. Residues 293-313 lie on the Cytoplasmic side of the membrane; it reads RNSDMKAALRKVLAMRFPSKQ.

Belongs to the G-protein coupled receptor 1 family. Olfactory epithelium.

It localises to the cell membrane. Functionally, odorant receptor. The chain is Olfactory receptor 1f45 (Or1f45) from Rattus norvegicus (Rat).